The primary structure comprises 205 residues: Large ribosomal subunit protein uL4 (205 aa).

It belongs to the universal ribosomal protein uL4 family. In terms of assembly, part of the 50S ribosomal subunit.

In terms of biological role, one of the primary rRNA binding proteins, this protein initially binds near the 5'-end of the 23S rRNA. It is important during the early stages of 50S assembly. It makes multiple contacts with different domains of the 23S rRNA in the assembled 50S subunit and ribosome. Forms part of the polypeptide exit tunnel. This Dinoroseobacter shibae (strain DSM 16493 / NCIMB 14021 / DFL 12) protein is Large ribosomal subunit protein uL4.